A 995-amino-acid chain; its full sequence is UPF0182 protein MUL_2505 (995 aa).

7 consecutive transmembrane segments (helical) span residues 18 to 38 (VLIL…RLID), 63 to 83 (FLVF…GLAL), 113 to 133 (LFGI…AQSY), 175 to 195 (FVAI…FGGI), 210 to 230 (IQLV…YWLN), 259 to 279 (KLIL…AIVL), and 287 to 307 (IGLV…PMIV). The interval 900-947 (AATGIQPTEGGAPANVPPNNAPSPEALPGTPPSPPTAVPPAPEASVTL) is disordered. Residues 928-941 (GTPPSPPTAVPPAP) are compositionally biased toward pro residues.

It belongs to the UPF0182 family.

It localises to the cell membrane. The chain is UPF0182 protein MUL_2505 from Mycobacterium ulcerans (strain Agy99).